Reading from the N-terminus, the 281-residue chain is Arabinooligosaccharides transport system permease protein AraQ (281 aa).

The next 6 membrane-spanning stretches (helical) occupy residues 15–35 (LTLF…CLLL), 81–101 (LVLG…IGYG), 112–132 (IIFV…MLPL), 142–162 (IDSY…VFFF), 185–205 (FGIF…AMII), and 247–267 (MLIS…LFFQ). The ABC transmembrane type-1 domain maps to 77-266 (FFNSLVLGLF…LPVIIIFLFF (190 aa)).

Belongs to the binding-protein-dependent transport system permease family. MalFG subfamily. As to quaternary structure, the complex is composed of two ATP-binding proteins (MsmX), two transmembrane proteins (AraP and AraQ) and a solute-binding protein (AraN).

Its subcellular location is the cell membrane. Part of the ABC transporter complex AraNPQ involved in the uptake of arabinooligosaccharides. Transports alpha-1,5-arabinooligosaccharides, at least up to four L-arabinosyl units. Responsible for the translocation of the substrate across the membrane. In Bacillus subtilis (strain 168), this protein is Arabinooligosaccharides transport system permease protein AraQ.